Here is a 300-residue protein sequence, read N- to C-terminus: Putative S-adenosyl-L-methionine-dependent methyltransferase MAB_4328c (300 aa).

S-adenosyl-L-methionine-binding positions include D126 and 155–156 (DL).

This sequence belongs to the UPF0677 family.

Exhibits S-adenosyl-L-methionine-dependent methyltransferase activity. The polypeptide is Putative S-adenosyl-L-methionine-dependent methyltransferase MAB_4328c (Mycobacteroides abscessus (strain ATCC 19977 / DSM 44196 / CCUG 20993 / CIP 104536 / JCM 13569 / NCTC 13031 / TMC 1543 / L948) (Mycobacterium abscessus)).